The sequence spans 513 residues: uncharacterized protein (513 aa).

Over residues 1 to 16 (MPREHDSKYHRERDMR) the composition is skewed to basic and acidic residues. A disordered region spans residues 1–21 (MPREHDSKYHRERDMRSGLQE).

This is an uncharacterized protein from Sinorhizobium fredii (strain NBRC 101917 / NGR234).